The following is an 872-amino-acid chain: Valine--tRNA ligase (872 aa).

The 'HIGH' region motif lies at 45 to 55 (PYPTGNLHIGN). A 'KMSKS' region motif is present at residues 524 to 528 (KMSKS). An ATP-binding site is contributed by Lys-527.

Belongs to the class-I aminoacyl-tRNA synthetase family. ValS type 2 subfamily.

The protein localises to the cytoplasm. It carries out the reaction tRNA(Val) + L-valine + ATP = L-valyl-tRNA(Val) + AMP + diphosphate. Catalyzes the attachment of valine to tRNA(Val). As ValRS can inadvertently accommodate and process structurally similar amino acids such as threonine, to avoid such errors, it has a 'posttransfer' editing activity that hydrolyzes mischarged Thr-tRNA(Val) in a tRNA-dependent manner. The sequence is that of Valine--tRNA ligase from Natronomonas pharaonis (strain ATCC 35678 / DSM 2160 / CIP 103997 / JCM 8858 / NBRC 14720 / NCIMB 2260 / Gabara) (Halobacterium pharaonis).